A 260-amino-acid chain; its full sequence is Dolichol-phosphate mannosyltransferase subunit 1 (260 aa).

The disordered stretch occupies residues 1–20 (MAAEEASRSSPRFRREPKGR). At A2 the chain carries N-acetylalanine. S9 carries the phosphoserine modification. GDP-alpha-D-mannose-binding residues include P32, Y34, E36, I63, D65, D118, A119, D120, R147, R234, and K240. D120 contacts Mg(2+). D120 is a Mn(2+) binding site.

The protein belongs to the glycosyltransferase 2 family. Component of the dolichol-phosphate mannose (DPM) synthase complex composed of DPM1, DPM2 and DPM3; within the complex, directly interacts with DPM3. This interaction may stabilize DPM1. The cofactor is Mg(2+). Mn(2+) serves as cofactor. It depends on Ca(2+) as a cofactor.

The protein localises to the endoplasmic reticulum. It carries out the reaction a di-trans,poly-cis-dolichyl phosphate + GDP-alpha-D-mannose = a di-trans,poly-cis-dolichyl beta-D-mannosyl phosphate + GDP. It functions in the pathway protein modification; protein glycosylation. Transfers mannose from GDP-mannose to dolichol monophosphate to form dolichol phosphate mannose (Dol-P-Man) which is the mannosyl donor in pathways leading to N-glycosylation, glycosyl phosphatidylinositol membrane anchoring, and O-mannosylation of proteins; catalytic subunit of the dolichol-phosphate mannose (DPM) synthase complex. This chain is Dolichol-phosphate mannosyltransferase subunit 1 (DPM1), found in Bos taurus (Bovine).